We begin with the raw amino-acid sequence, 414 residues long: L-cysteine:1D-myo-inositol 2-amino-2-deoxy-alpha-D-glucopyranoside ligase (414 aa).

Cysteine 43 is a Zn(2+) binding site. L-cysteinyl-5'-AMP-binding positions include 43 to 46 (CGIT), threonine 58, and 81 to 83 (NIT). Residues 45–55 (ITPYDATHLGH) carry the 'HIGH' region motif. Positions 189-194 (ERGGDP) match the 'ERGGDP' region motif. Residue tryptophan 229 participates in L-cysteinyl-5'-AMP binding. Zn(2+) is bound at residue cysteine 233. An L-cysteinyl-5'-AMP-binding site is contributed by 251 to 253 (GSD). Residue histidine 258 participates in Zn(2+) binding. Isoleucine 285 contributes to the L-cysteinyl-5'-AMP binding site. The short motif at 291 to 295 (KMSKS) is the 'KMSKS' region element.

This sequence belongs to the class-I aminoacyl-tRNA synthetase family. MshC subfamily. In terms of assembly, monomer. Requires Zn(2+) as cofactor.

It carries out the reaction 1D-myo-inositol 2-amino-2-deoxy-alpha-D-glucopyranoside + L-cysteine + ATP = 1D-myo-inositol 2-(L-cysteinylamino)-2-deoxy-alpha-D-glucopyranoside + AMP + diphosphate + H(+). In terms of biological role, catalyzes the ATP-dependent condensation of GlcN-Ins and L-cysteine to form L-Cys-GlcN-Ins. This chain is L-cysteine:1D-myo-inositol 2-amino-2-deoxy-alpha-D-glucopyranoside ligase (mshC), found in Mycobacterium bovis (strain ATCC BAA-935 / AF2122/97).